The sequence spans 29 residues: Toxin II.9 (29 aa).

Residues 2-29 enclose the LCN-type CS-alpha/beta domain; the sequence is KDGYLVNKYTGCKVNCYKLGENKFCNRE.

This sequence belongs to the long (4 C-C) scorpion toxin superfamily. Sodium channel inhibitor family. Beta subfamily. In terms of tissue distribution, expressed by the venom gland.

The protein localises to the secreted. Its function is as follows. Binds to sodium channels (Nav) and shift the voltage of activation toward more negative potentials. This toxin is active on crustaceans. In Centruroides limpidus (Mexican scorpion), this protein is Toxin II.9.